The following is a 158-amino-acid chain: Succinate dehydrogenase [ubiquinone] cytochrome b small subunit, mitochondrial (158 aa).

The N-terminal 55 residues, 1–55 (MALWRLSVLCGAREGRALFLRTPVVRPALVSAFLQDRPAQGWCGTQHIHLSPSHH), are a transit peptide targeting the mitochondrion. The Mitochondrial matrix portion of the chain corresponds to 56–62 (SGSKAAS). A helical transmembrane segment spans residues 63 to 84 (LHWTGERVVSVLLLGLIPAAYL). The Mitochondrial intermembrane portion of the chain corresponds to 85–89 (NPCSA). Residues 90–110 (MDYSLAATLTLHSHWGIGQVV) form a helical membrane-spanning segment. Residue His-101 participates in heme b binding. The Mitochondrial matrix portion of the chain corresponds to 111-119 (TDYVHGDAV). An a ubiquinone-binding site is contributed by Tyr-113. Residues 120-141 (QKAAKTGLLVLSAFTFAGLCYF) form a helical membrane-spanning segment. The Mitochondrial intermembrane segment spans residues 142-158 (NYHDVGICKAVAMLWKL).

It belongs to the CybS family. In terms of assembly, component of complex II composed of four subunits: the flavoprotein (FP) SDHA, iron-sulfur protein (IP) SDHB, and a cytochrome b560 composed of SDHC and SDHD.

Its subcellular location is the mitochondrion inner membrane. Its pathway is carbohydrate metabolism; tricarboxylic acid cycle. Membrane-anchoring subunit of succinate dehydrogenase (SDH) that is involved in complex II of the mitochondrial electron transport chain and is responsible for transferring electrons from succinate to ubiquinone (coenzyme Q). SDH also oxidizes malate to the non-canonical enol form of oxaloacetate, enol-oxaloacetate. Enol-oxaloacetate, which is a potent inhibitor of the succinate dehydrogenase activity, is further isomerized into keto-oxaloacetate. This chain is Succinate dehydrogenase [ubiquinone] cytochrome b small subunit, mitochondrial (SDHD), found in Bos taurus (Bovine).